The following is a 506-amino-acid chain: 2-isopropylmalate synthase (506 aa).

One can recognise a Pyruvate carboxyltransferase domain in the interval 4 to 266 (ILFMDTTLRD…EPSMTLKEIK (263 aa)). Mn(2+)-binding residues include aspartate 13, histidine 201, histidine 203, and asparagine 237. A regulatory domain region spans residues 390 to 506 (NITQLQVHFV…KLKSFIQLVK (117 aa)).

Belongs to the alpha-IPM synthase/homocitrate synthase family. LeuA type 1 subfamily. In terms of assembly, homodimer. Mn(2+) serves as cofactor.

The protein localises to the cytoplasm. The catalysed reaction is 3-methyl-2-oxobutanoate + acetyl-CoA + H2O = (2S)-2-isopropylmalate + CoA + H(+). It functions in the pathway amino-acid biosynthesis; L-leucine biosynthesis; L-leucine from 3-methyl-2-oxobutanoate: step 1/4. Functionally, catalyzes the condensation of the acetyl group of acetyl-CoA with 3-methyl-2-oxobutanoate (2-ketoisovalerate) to form 3-carboxy-3-hydroxy-4-methylpentanoate (2-isopropylmalate). The sequence is that of 2-isopropylmalate synthase from Bacillus anthracis (strain A0248).